The chain runs to 248 residues: Conoporin-Cn1 (248 aa).

Positions 1 to 23 are cleaved as a signal peptide; sequence MGVQFPALKTMVTVFLLLMGNMS. The N-terminal region stretch occupies residues 45–64; it reads TPGSSLYGVALKDLADTSYN. Residues glycine 120, serine 138, proline 140, tyrosine 167, and tyrosine 171 each contribute to the phosphocholine site.

This sequence belongs to the actinoporin family. Conoidea subfamily. Octamer or nonamer in membranes. Monomer in the soluble state. Post-translationally, 9 isoforms are detected in the injectable venom, mainly corresponding to different oxidative states. As to expression, expressed by the venom duct.

The protein resides in the secreted. Its subcellular location is the nematocyst. The protein localises to the target cell membrane. In terms of biological role, pore-forming protein that forms pores of around 1 nm and causes cardiac stimulation and cytolysis. This Conus consors (Singed cone) protein is Conoporin-Cn1.